The chain runs to 136 residues: MGMLSEFKAFAVKGNVVDMAVGIIIGAAFGKIVSSFVGDVIMPPLGLLIGGVDFSDLAITLKQAQGDMPAVVLAYGRFIQTVIDFLIIAFAIFIGVKALNQLKRKEAEAPSLPPAPTRDQQLLEEIRDLLKTRGKS.

2 helical membrane-spanning segments follow: residues 9 to 29 (AFAVKGNVVDMAVGIIIGAAF) and 78 to 98 (FIQTVIDFLIIAFAIFIGVKA).

The protein belongs to the MscL family. Homopentamer.

It is found in the cell inner membrane. In terms of biological role, channel that opens in response to stretch forces in the membrane lipid bilayer. May participate in the regulation of osmotic pressure changes within the cell. The polypeptide is Large-conductance mechanosensitive channel (Azotobacter vinelandii (strain DJ / ATCC BAA-1303)).